The chain runs to 138 residues: uncharacterized protein (138 aa).

The tract at residues 89–138 (DDYEDDFEDSDFQDGDFDDFEDEDGFDDDDDFEDDDFEYEDEDNDLDFDE) is disordered.

This is an uncharacterized protein from Treponema pallidum (strain Nichols).